We begin with the raw amino-acid sequence, 177 residues long: Putative thioredoxin peroxidase (177 aa).

Residues 1–158 form the Thioredoxin domain; the sequence is MFPKTLTDSK…IIRLIDAITF (158 aa). Catalysis depends on C45, which acts as the Cysteine sulfenic acid (-SOH) intermediate.

Belongs to the peroxiredoxin family. AhpC/Prx1 subfamily. Homodimer; disulfide-linked, upon oxidation.

The enzyme catalyses a hydroperoxide + [thioredoxin]-dithiol = an alcohol + [thioredoxin]-disulfide + H2O. In terms of biological role, thiol-specific peroxidase that catalyzes the reduction of hydrogen peroxide and organic hydroperoxides to water and alcohols, respectively. Plays a role in cell protection against oxidative stress by detoxifying peroxides and as sensor of hydrogen peroxide-mediated signaling events. This chain is Putative thioredoxin peroxidase, found in Encephalitozoon cuniculi (strain GB-M1) (Microsporidian parasite).